The primary structure comprises 373 residues: Schlafen-like protein 1 (373 aa).

The disordered stretch occupies residues M1 to P67. Positions K247–V373 are SLFN-like fold.

Belongs to the Schlafen family. As to quaternary structure, component of the trimeric PUCH (precursor of 21U RNA 5'-end cleavage holoenzyme) complex; consisting of tofu-1, tofu-2 and either slfl-3 or slfl-4; which is required for processing of piRNA precursors. Within the complex, interacts (via N-terminus) with tofu-2 (via N-terminus); the interaction stabilizes tofu-2 and may form a functional nuclease. Within the complex, required for the interaction of tofu-2 (via N-terminus) with slfl-3 (via N-terminus). Interacts (via residues 82-172) with the PETISCO complex subunit tofu-6 (via residues 120-314); the interaction between the PETISCO and PUCH complex members enhances piRNA production in vivo. Expressed in the germline.

It localises to the cytoplasm. In terms of biological role, component of the trimeric PUCH (precursor of 21U RNA 5'-end cleavage holoenzyme) complex, that acts as an endoribonuclease processing the 5'-end of precursor Piwi-interacting RNAs (piRNAs). The PUCH complex consists of tofu-1, tofu-2 and either slfl-3 or slfl-4, with tofu-2 exhibiting endoribonuclease activity. PUCH-mediated processing strictly requires a 7-methyl-G cap (m7 G-cap) and an uracil at position three (U3). PUCH also exhibits a strict bias for piRNA precursors with an A or G at position 1. Mature piRNA production is enhanced by the interaction of PUCH with the PETISCO complex, which is stabilizing piRNA precursors and allows their processing by PUCH. The sequence is that of Schlafen-like protein 1 from Caenorhabditis elegans.